The following is an 869-amino-acid chain: Phosphatidylethanolamine N-methyltransferase (869 aa).

Serine 2 carries the N-acetylserine modification. The Lumenal segment spans residues 2-55 (SSCKTTLSEMVGSVTKDRGTINVEARTRSSNVTFKPPVTHDMVRSLFDPTLKKS). A helical membrane pass occupies residues 56–76 (LLEKCIALAIISNFFICYWVF). Topologically, residues 77-86 (QRFGLQFTKY) are cytoplasmic. A helical transmembrane segment spans residues 87–107 (FFLVQYLFWRIAYNLGIGLVL). Over 108–187 (HYQSHYETLT…EINVWLIFRQ (80 aa)) the chain is Lumenal. The helical transmembrane segment at 188-208 (FVDLILMQDFVTYIIYVYLSI) threads the bilayer. The Cytoplasmic portion of the chain corresponds to 209–212 (PYSW). The helical transmembrane segment at 213–233 (VQIFNWRSLLGVILILFNIWV) threads the bilayer. The Lumenal segment spans residues 234–258 (KLDAHRVVKDYAWYWGDFFFLEESE). The chain crosses the membrane as a helical span at residues 259-279 (LIFDGVFNISPHPMYSIGYLG). Residues 280-291 (YYGLSLICNDYK) are Cytoplasmic-facing. Residues 292–310 (VLLVSVFGHYSQFLFLKYV) traverse the membrane as a helical segment. Topologically, residues 311-362 (ENPHIERTYGDGTDSDSQMNSRIDDLISKENYDYSRPLINMGLSFNNFNKLR) are lumenal. The helical transmembrane segment at 363-383 (FTDYFTIGTVAALMLGTIMNA) threads the bilayer. At 384–389 (RFINLN) the chain is on the cytoplasmic side. A helical membrane pass occupies residues 390 to 410 (YLFITVFVTKLVSWLFISTIL). Residues 411–439 (YKQSQSKWFTRLFLENGYTQVYSYEQWQF) are Lumenal-facing. A helical membrane pass occupies residues 440–460 (IYNYYLVLTYTLMIIHTGLQI). Over 461–463 (WSN) the chain is Cytoplasmic. The helical transmembrane segment at 464-484 (FSNINNSQLIFGLILVALQTW) threads the bilayer. Residues 485–534 (CDKETRLAISDFGWFYGDFFLSNYISTRKLTSQGIYRYLNHPEAVLGVVG) are Lumenal-facing. Residues 535–555 (VWGTVLMTNFAVTNIILAVLW) form a helical membrane-spanning segment. The Cytoplasmic portion of the chain corresponds to 556 to 869 (TLTNFILVKF…DIKQTLDSLA (314 aa)).

This sequence belongs to the class VI-like SAM-binding methyltransferase superfamily. CHO2 family.

Its subcellular location is the endoplasmic reticulum membrane. The enzyme catalyses a 1,2-diacyl-sn-glycero-3-phosphoethanolamine + S-adenosyl-L-methionine = a 1,2-diacyl-sn-glycero-3-phospho-N-methylethanolamine + S-adenosyl-L-homocysteine + H(+). The protein operates within phospholipid metabolism; phosphatidylcholine biosynthesis. In terms of biological role, catalyzes the first step of the methylation pathway of phosphatidylcholine biosynthesis, the SAM-dependent methylation of phosphatidylethanolamine (PE) to phosphatidylmonomethylethanolamine (PMME). Preferentially converts di-C16:1 substrates. The polypeptide is Phosphatidylethanolamine N-methyltransferase (Saccharomyces cerevisiae (strain ATCC 204508 / S288c) (Baker's yeast)).